The primary structure comprises 54 residues: Large ribosomal subunit protein bL32c (54 aa).

Positions 1-20 are enriched in basic residues; it reads MAVPKKRVSKSKRDMRKTTW. A disordered region spans residues 1–54; it reads MAVPKKRVSKSKRDMRKTTWKNKASKEAKKALSLAKSVSTGKSKSKGFQIKSSN. A compositionally biased stretch (low complexity) spans 31–42; it reads ALSLAKSVSTGK.

The protein belongs to the bacterial ribosomal protein bL32 family.

Its subcellular location is the plastid. It is found in the chloroplast. This Chlorokybus atmophyticus (Soil alga) protein is Large ribosomal subunit protein bL32c.